The primary structure comprises 300 residues: DNA repair protein PprA (300 aa).

Thr-88 carries the phosphothreonine modification. A Phosphoserine modification is found at Ser-128. At Thr-160 the chain carries Phosphothreonine.

Post-translationally, phosphorylated by RqkA in vitro. Phosphorylated primarily at Thr-88, and to a little extent at Ser-128 and Thr-160.

With respect to regulation, phosphorylation increases DNA binding affinity. Functionally, dsDNA-binding protein that contributes to the ionizing radiation resistance of D.radiodurans. Plays a role in DNA repair and genome reconstitution, and is necessary for recovery from severe genomic fragmentation as a result of exposure to severe levels of ionizing radiation. In vitro, binds to double-stranded DNA carrying strand breaks and stimulates the DNA end-joining reaction catalyzed by DNA ligases. Thus, PprA plays a critical role in a non-homologous end-joining (NHEJ) pathway for the repair of radiation-induced DNA double-strands breaks. Cannot bind to dsDNA without strand breaks or single-stranded DNA. The protein is DNA repair protein PprA (pprA) of Deinococcus radiodurans (strain ATCC 13939 / DSM 20539 / JCM 16871 / CCUG 27074 / LMG 4051 / NBRC 15346 / NCIMB 9279 / VKM B-1422 / R1).